Consider the following 713-residue polypeptide: Transcription activator of gluconeogenesis CPC735_053490 (713 aa).

Residues 1 to 70 (MTANAINGPV…NAKDPLRPRR (70 aa)) form a disordered region. The span at 19-56 (GDNNKSADTTMADQGTRPESQPQGQNNGAKPQNGQTKP) shows a compositional bias: polar residues. The zn(2)-C6 fungal-type DNA-binding region spans 77–105 (CFACQRAHLTCGDERPCQRCIKRGIQNAC). The span at 145–159 (PLTRNGSNSKTNFYP) shows a compositional bias: polar residues. Disordered regions lie at residues 145 to 229 (PLTR…ASGQ), 274 to 318 (GAGE…LFGD), 541 to 564 (GGSS…GMDI), and 623 to 665 (GTTS…QRKW). A compositionally biased stretch (low complexity) spans 160–171 (QQQSSFNNFYQN). The span at 191–212 (FPSQSPVSPTFNMTANPAASGN) shows a compositional bias: polar residues. Residues 213–229 (QGLPSSLSASNSNASGQ) show a composition bias toward low complexity. Composition is skewed to polar residues over residues 295–312 (SGTY…TGQP), 541–558 (GGSS…SFTP), and 649–659 (GASNGQSQHSL).

It belongs to the ERT1/acuK family.

Its subcellular location is the nucleus. Functionally, transcription factor which regulates nonfermentable carbon utilization. Activator of gluconeogenetic genes. The chain is Transcription activator of gluconeogenesis CPC735_053490 from Coccidioides posadasii (strain C735) (Valley fever fungus).